We begin with the raw amino-acid sequence, 301 residues long: NAD kinase (301 aa).

Aspartate 73 (proton acceptor) is an active-site residue. NAD(+)-binding positions include 73–74 (DG), 151–152 (ND), arginine 179, aspartate 181, 192–197 (TAYALS), alanine 216, and glutamine 250.

The protein belongs to the NAD kinase family. It depends on a divalent metal cation as a cofactor.

Its subcellular location is the cytoplasm. The enzyme catalyses NAD(+) + ATP = ADP + NADP(+) + H(+). In terms of biological role, involved in the regulation of the intracellular balance of NAD and NADP, and is a key enzyme in the biosynthesis of NADP. Catalyzes specifically the phosphorylation on 2'-hydroxyl of the adenosine moiety of NAD to yield NADP. In Methylibium petroleiphilum (strain ATCC BAA-1232 / LMG 22953 / PM1), this protein is NAD kinase.